We begin with the raw amino-acid sequence, 462 residues long: Fumarate hydratase class II (462 aa).

Residues 97 to 99 (SGT), 127 to 130 (HPND), 137 to 139 (SSN), and T185 each bind substrate. Residue H186 is the Proton donor/acceptor of the active site. S316 is an active-site residue. Substrate-binding positions include S317 and 322 to 324 (KVN).

This sequence belongs to the class-II fumarase/aspartase family. Fumarase subfamily. Homotetramer.

Its subcellular location is the cytoplasm. The enzyme catalyses (S)-malate = fumarate + H2O. Its pathway is carbohydrate metabolism; tricarboxylic acid cycle; (S)-malate from fumarate: step 1/1. In terms of biological role, involved in the TCA cycle. Catalyzes the stereospecific interconversion of fumarate to L-malate. This is Fumarate hydratase class II from Halalkalibacterium halodurans (strain ATCC BAA-125 / DSM 18197 / FERM 7344 / JCM 9153 / C-125) (Bacillus halodurans).